Reading from the N-terminus, the 127-residue chain is Small ribosomal subunit protein uS11 (127 aa).

This sequence belongs to the universal ribosomal protein uS11 family. In terms of assembly, part of the 30S ribosomal subunit.

Located on the platform of the 30S subunit. This chain is Small ribosomal subunit protein uS11, found in Picrophilus torridus (strain ATCC 700027 / DSM 9790 / JCM 10055 / NBRC 100828 / KAW 2/3).